The primary structure comprises 1906 residues: Myosin light chain kinase, smooth muscle (1906 aa).

Ig-like C2-type domains are found at residues Pro-28–Thr-117 and Pro-156–Thr-244. Disordered stretches follow at residues Ser-127–Lys-157 and Glu-309–Ser-453. A compositionally biased stretch (basic and acidic residues) spans Glu-309 to Lys-321. Composition is skewed to polar residues over residues Leu-345–Leu-354 and Pro-384–Pro-402. A compositionally biased stretch (basic and acidic residues) spans Arg-403–Pro-424. Ig-like C2-type domains follow at residues Pro-429–Thr-517, Pro-521–Thr-613, Pro-637–Thr-725, and Pro-735–Ser-830. The stretch at Val-660 to Glu-676 is one IIA-1 repeat. The tract at residues Val-660–Pro-1833 is 4 X repeats, motif IIA. The stretch at Ser-693 to Thr-708 is one IIB-1 repeat. The segment at Ser-693 to Thr-1866 is 5 X repeats, motif IIB. The stretch at Ile-758 to Glu-774 is one IIA-2 repeat. One copy of the IIB-2 repeat lies at Thr-791 to Ile-807. Disordered regions lie at residues Arg-831 to Val-881 and Pro-947 to Phe-1086. Basic and acidic residues-rich tracts occupy residues Glu-833–Gly-850 and Ser-867–Val-881. An III-1 repeat occupies Ala-970 to Lys-987. The 4 X repeats, motif III stretch occupies residues Ala-970 to Gln-1226. Residues Thr-977–Pro-988 show a composition bias toward pro residues. Residues Ala-999–Asn-1016 form an III-2 repeat. A compositionally biased stretch (basic and acidic residues) spans Val-1039–His-1051. An III-3 repeat occupies Ile-1061–Pro-1078. 2 consecutive Ig-like C2-type domains span residues Pro-1084–Leu-1172 and Pro-1225–Thr-1313. The IIA-3 repeat unit spans residues Ile-1107 to Ala-1123. Residues Ser-1140–Cys-1156 form an IIB-3 repeat. The disordered stretch occupies residues Lys-1180–Ile-1227. An III-4 repeat occupies Val-1209 to Gln-1226. One copy of the IIB-4 repeat lies at Lys-1281–Leu-1297. A motif IA region spans residues Lys-1317–Lys-1364. The Fibronectin type-III domain maps to Pro-1321–Lys-1414. The motif IB stretch occupies residues Arg-1385 to Pro-1402. The disordered stretch occupies residues Lys-1414–Glu-1433. Positions Gln-1415–Lys-1432 are enriched in acidic residues. The 256-residue stretch at Tyr-1453–Leu-1708 folds into the Protein kinase domain. ATP-binding positions include Leu-1459–Val-1467 and Lys-1482. Asp-1574 acts as the Proton acceptor in catalysis. A calmodulin-binding region spans residues Thr-1700–Gly-1763. Positions Glu-1716–Tyr-1728 are calmodulin autoinhibition (AM13) region. The calmodulin recognition (RS20) region stretch occupies residues Ala-1730 to Ser-1749. The residue at position 1762 (Ser-1762) is a Phosphoserine; by PKG. At Ser-1768 the chain carries Phosphoserine; by MAPK. The Ig-like C2-type 9 domain occupies Pro-1794–Glu-1885. Residues Ile-1817–Pro-1833 form an IIA-4 repeat. An IIB-5 repeat occupies Ser-1851–Thr-1866. The tract at residues Glu-1885–Glu-1906 is disordered. Residues Gly-1893–Glu-1906 show a composition bias toward acidic residues.

It belongs to the protein kinase superfamily. CAMK Ser/Thr protein kinase family. All isoforms including Telokin bind calmodulin. Mg(2+) serves as cofactor. Requires Ca(2+) as cofactor. The C-terminus is deglutamylated, leading to the formation of Myosin light chain kinase, smooth muscle, deglutamylated form. The C-terminus is variable, with one to five C-terminal glutamyl residues being removed producing five forms differring in their number of C-terminal glutamyl residues. In terms of processing, acetylated. Post-translationally, phosphorylation of telokin by PKG has no significant effect on its myosin binding activity, but promotes translocation to the membrane. In terms of tissue distribution, isoform telokin is expressed in gizzard, heart, lung, intestine, and skeletal muscle although the levels of the expression in the latter were much less than that in the gizzard.

The protein resides in the cytoplasm. It localises to the cytosol. Its subcellular location is the membrane. The enzyme catalyses L-seryl-[myosin light chain] + ATP = O-phospho-L-seryl-[myosin light chain] + ADP + H(+). It catalyses the reaction L-threonyl-[myosin light chain] + ATP = O-phospho-L-threonyl-[myosin light chain] + ADP + H(+). Activated by phosphorylation on Tyr-478. Isoforms which lack this tyrosine residue are not regulated in this way. All catalytically active isoforms require binding to calcium and calmodulin for activation. Its function is as follows. Phosphorylates a specific serine in the N-terminus of a myosin light chain, which leads to the formation of calmodulin/MLCK signal transduction complexes which allow selective transduction of calcium signals. This chain is Myosin light chain kinase, smooth muscle (Mylk), found in Gallus gallus (Chicken).